The chain runs to 228 residues: Prolactin (228 aa).

A signal peptide spans 1–29 (MCPKGSSVKGSLLLLLLMSSRFLFKAVES). Residues cysteine 33 and cysteine 40 are joined by a disulfide bond. Phosphoserine is present on residues serine 55, serine 63, and serine 119. Cystine bridges form between cysteine 87–cysteine 203 and cysteine 220–cysteine 228.

This sequence belongs to the somatotropin/prolactin family. As to quaternary structure, interacts with PRLR.

It localises to the secreted. In terms of biological role, prolactin acts primarily on the mammary gland by promoting lactation. The chain is Prolactin (PRL) from Monodelphis domestica (Gray short-tailed opossum).